The chain runs to 60 residues: UPF0434 protein YcaR (60 aa).

This sequence belongs to the UPF0434 family.

The chain is UPF0434 protein YcaR from Salmonella arizonae (strain ATCC BAA-731 / CDC346-86 / RSK2980).